We begin with the raw amino-acid sequence, 948 residues long: Valine--tRNA ligase (948 aa).

The short motif at 40-50 is the 'HIGH' region element; that stretch reads PNVTGSLHMGH. The short motif at 551 to 555 is the 'KMSKS' region element; that stretch reads KMSKS. K554 lines the ATP pocket. A coiled-coil region spans residues 879-945; the sequence is LIDKGAELAR…GKLAEQHARI (67 aa).

Belongs to the class-I aminoacyl-tRNA synthetase family. ValS type 1 subfamily. In terms of assembly, monomer.

It is found in the cytoplasm. It catalyses the reaction tRNA(Val) + L-valine + ATP = L-valyl-tRNA(Val) + AMP + diphosphate. In terms of biological role, catalyzes the attachment of valine to tRNA(Val). As ValRS can inadvertently accommodate and process structurally similar amino acids such as threonine, to avoid such errors, it has a 'posttransfer' editing activity that hydrolyzes mischarged Thr-tRNA(Val) in a tRNA-dependent manner. The sequence is that of Valine--tRNA ligase from Pseudomonas savastanoi pv. phaseolicola (strain 1448A / Race 6) (Pseudomonas syringae pv. phaseolicola (strain 1448A / Race 6)).